The chain runs to 153 residues: MIVERVLYNIKDIDLEKLEVDFVDIEWYEVQKKILRKLSSNGIEVGIRNSNGEALKEGDVLWQEGNKVLVVRIPYCDCIVLKPQNMYEMGKTCYEMGNRHAPLFIDGDELMTPYDEPLMQALIKCGLSPYKKSCKLTTPLGGNLHGYSHSHSH.

It belongs to the UreE family.

The protein resides in the cytoplasm. Its function is as follows. Involved in urease metallocenter assembly. Binds nickel. Probably functions as a nickel donor during metallocenter assembly. The polypeptide is Urease accessory protein UreE (Acetivibrio thermocellus (strain ATCC 27405 / DSM 1237 / JCM 9322 / NBRC 103400 / NCIMB 10682 / NRRL B-4536 / VPI 7372) (Clostridium thermocellum)).